A 235-amino-acid chain; its full sequence is Coiled-coil domain-containing protein 71L (235 aa).

The segment covering 1–13 has biased composition (basic residues); that stretch reads MRRSMKRRRRRRP. Residues 1–30 are disordered; it reads MRRSMKRRRRRRPVAPATAARGGDFRAEDG. Serine 52 and serine 89 each carry phosphoserine. The segment at 109–167 is disordered; it reads PDPPGPPTARGQARRPVPRAAARRRRRGARAAAARRRKPRPPPPPPPPPEESCPAKPVA. Residues 120–148 are compositionally biased toward basic residues; the sequence is QARRPVPRAAARRRRRGARAAAARRRKPR. Residues 149-159 are compositionally biased toward pro residues; it reads PPPPPPPPPEE. Threonine 185 carries the phosphothreonine modification. Serine 198 carries the post-translational modification Phosphoserine.

The chain is Coiled-coil domain-containing protein 71L (CCDC71L) from Homo sapiens (Human).